The following is a 477-amino-acid chain: Aspartyl/glutamyl-tRNA(Asn/Gln) amidotransferase subunit B (477 aa).

Belongs to the GatB/GatE family. GatB subfamily. In terms of assembly, heterotrimer of A, B and C subunits.

It catalyses the reaction L-glutamyl-tRNA(Gln) + L-glutamine + ATP + H2O = L-glutaminyl-tRNA(Gln) + L-glutamate + ADP + phosphate + H(+). The catalysed reaction is L-aspartyl-tRNA(Asn) + L-glutamine + ATP + H2O = L-asparaginyl-tRNA(Asn) + L-glutamate + ADP + phosphate + 2 H(+). Functionally, allows the formation of correctly charged Asn-tRNA(Asn) or Gln-tRNA(Gln) through the transamidation of misacylated Asp-tRNA(Asn) or Glu-tRNA(Gln) in organisms which lack either or both of asparaginyl-tRNA or glutaminyl-tRNA synthetases. The reaction takes place in the presence of glutamine and ATP through an activated phospho-Asp-tRNA(Asn) or phospho-Glu-tRNA(Gln). The protein is Aspartyl/glutamyl-tRNA(Asn/Gln) amidotransferase subunit B of Coxiella burnetii (strain CbuK_Q154) (Coxiella burnetii (strain Q154)).